We begin with the raw amino-acid sequence, 388 residues long: Succinate--CoA ligase [ADP-forming] subunit beta (388 aa).

Positions 9–245 (KELLKSYGLP…KSQENERELK (237 aa)) constitute an ATP-grasp domain. Residues lysine 46, 53–55 (GRG), glutamate 100, tyrosine 103, and glutamate 108 contribute to the ATP site. Mg(2+) contacts are provided by asparagine 200 and aspartate 214. Residues asparagine 265 and 322–324 (GIV) contribute to the substrate site.

This sequence belongs to the succinate/malate CoA ligase beta subunit family. Heterotetramer of two alpha and two beta subunits. Mg(2+) serves as cofactor.

It carries out the reaction succinate + ATP + CoA = succinyl-CoA + ADP + phosphate. It catalyses the reaction GTP + succinate + CoA = succinyl-CoA + GDP + phosphate. The protein operates within carbohydrate metabolism; tricarboxylic acid cycle; succinate from succinyl-CoA (ligase route): step 1/1. Its function is as follows. Succinyl-CoA synthetase functions in the citric acid cycle (TCA), coupling the hydrolysis of succinyl-CoA to the synthesis of either ATP or GTP and thus represents the only step of substrate-level phosphorylation in the TCA. The beta subunit provides nucleotide specificity of the enzyme and binds the substrate succinate, while the binding sites for coenzyme A and phosphate are found in the alpha subunit. In Psychrobacter cryohalolentis (strain ATCC BAA-1226 / DSM 17306 / VKM B-2378 / K5), this protein is Succinate--CoA ligase [ADP-forming] subunit beta.